A 252-amino-acid polypeptide reads, in one-letter code: Ribonuclease HII (252 aa).

The 192-residue stretch at 41–232 folds into the RNase H type-2 domain; it reads LLVAGVDEAG…VRLALEGREQ (192 aa). Positions 47, 48, and 140 each coordinate a divalent metal cation.

Belongs to the RNase HII family. Requires Mn(2+) as cofactor. Mg(2+) is required as a cofactor.

It localises to the cytoplasm. It catalyses the reaction Endonucleolytic cleavage to 5'-phosphomonoester.. Endonuclease that specifically degrades the RNA of RNA-DNA hybrids. The chain is Ribonuclease HII from Xanthomonas oryzae pv. oryzae (strain KACC10331 / KXO85).